We begin with the raw amino-acid sequence, 182 residues long: tRNA-splicing endonuclease (182 aa).

Catalysis depends on residues Y119, H127, and K158.

The protein belongs to the tRNA-intron endonuclease family. Archaeal short subfamily. In terms of assembly, homotetramer; although the tetramer contains four active sites, only two participate in the cleavage. Therefore, it should be considered as a dimer of dimers.

The catalysed reaction is pretRNA = a 3'-half-tRNA molecule with a 5'-OH end + a 5'-half-tRNA molecule with a 2',3'-cyclic phosphate end + an intron with a 2',3'-cyclic phosphate and a 5'-hydroxyl terminus.. Functionally, endonuclease that removes tRNA introns. Cleaves pre-tRNA at the 5'- and 3'-splice sites to release the intron. The products are an intron and two tRNA half-molecules bearing 2',3' cyclic phosphate and 5'-OH termini. Recognizes a pseudosymmetric substrate in which 2 bulged loops of 3 bases are separated by a stem of 4 bp. This Saccharolobus solfataricus (strain ATCC 35092 / DSM 1617 / JCM 11322 / P2) (Sulfolobus solfataricus) protein is tRNA-splicing endonuclease.